Here is a 209-residue protein sequence, read N- to C-terminus: Holliday junction branch migration complex subunit RuvA (209 aa).

The domain I stretch occupies residues 1–64 (MIGKLKGLVD…EDSIKLYGFA (64 aa)). Residues 65–143 (SETEREWFRL…ALGASLHTLA (79 aa)) form a domain II region. The flexible linker stretch occupies residues 144–154 (GAGSEGAGVEA). The tract at residues 155 to 209 (PASGAVSDAISVLVNLGFGRSQAAVAVAASSKALGSGAGAGDLAKRALQELAQSG) is domain III.

It belongs to the RuvA family. In terms of assembly, homotetramer. Forms an RuvA(8)-RuvB(12)-Holliday junction (HJ) complex. HJ DNA is sandwiched between 2 RuvA tetramers; dsDNA enters through RuvA and exits via RuvB. An RuvB hexamer assembles on each DNA strand where it exits the tetramer. Each RuvB hexamer is contacted by two RuvA subunits (via domain III) on 2 adjacent RuvB subunits; this complex drives branch migration. In the full resolvosome a probable DNA-RuvA(4)-RuvB(12)-RuvC(2) complex forms which resolves the HJ.

It localises to the cytoplasm. In terms of biological role, the RuvA-RuvB-RuvC complex processes Holliday junction (HJ) DNA during genetic recombination and DNA repair, while the RuvA-RuvB complex plays an important role in the rescue of blocked DNA replication forks via replication fork reversal (RFR). RuvA specifically binds to HJ cruciform DNA, conferring on it an open structure. The RuvB hexamer acts as an ATP-dependent pump, pulling dsDNA into and through the RuvAB complex. HJ branch migration allows RuvC to scan DNA until it finds its consensus sequence, where it cleaves and resolves the cruciform DNA. This is Holliday junction branch migration complex subunit RuvA from Methylocella silvestris (strain DSM 15510 / CIP 108128 / LMG 27833 / NCIMB 13906 / BL2).